The following is a 506-amino-acid chain: Cytochrome P450 4B1 (506 aa).

E310 serves as a coordination point for heme. S431 carries the post-translational modification Phosphoserine. Position 448 (C448) interacts with heme.

This sequence belongs to the cytochrome P450 family. Requires heme as cofactor.

The protein resides in the endoplasmic reticulum membrane. It localises to the microsome membrane. The catalysed reaction is an organic molecule + reduced [NADPH--hemoprotein reductase] + O2 = an alcohol + oxidized [NADPH--hemoprotein reductase] + H2O + H(+). In terms of biological role, cytochromes P450 are a group of heme-thiolate monooxygenases. In liver microsomes, this enzyme is involved in an NADPH-dependent electron transport pathway. It oxidizes a variety of structurally unrelated compounds, including steroids, fatty acids, and xenobiotics. In Oryctolagus cuniculus (Rabbit), this protein is Cytochrome P450 4B1 (CYP4B1).